The chain runs to 645 residues: MNVINCEEVKRDEFHTEKYYESYNIFGAHIVTEDEMRGVRFTVWAPHAKAMSVVGDFNEWDYEQHKMLQVTEEGIWSLFIPHIEEKEIYKYAIETMAGDVIFKADPYAVYAEVRPNTASVVFDIKGYEWNDKNWSRKKKKKSVYKEAMTVYELHFGSWKKKEDGTLYSYREMAEELIPYVVEHQFTHIEIMPLVEHPYDRSWGYQGTGYYAATSRFGTPHDLMHFVDECHKYGIGVILDWVPGHFCKDAHGLYLFDGTPTYEYKDKDVQENPVWGTVNFDLGKREVRNFLISNALFWMRYFHIDGFRVDAVANMLYWNKEGQEQSNEHAVSFLRELNEAVFAEDEDFLMTAEDSTAWPLVTAPTYEGGLGFNYKWNMGWMNDVLKYMECAPEYRKYIHEKMTFSLLYAYSENFILPLSHDEVVHGKKSLLNKMPGDYWDKFAQLRLLYGYFFTHPGKKLLFMGGEFGQFDEWKDLEDLDWNLHDFEMHRYMHDYFKELIALYKRSKPLWQLDHSPEGFQWIDANNNEQSIFSFIRQGDKQEDALVVVCNFTKATYENYKVGVPDFEYYNEVLNSDAEQYGGSGQVNKKRLKAIQEPFHNQAAHVEITIPPFGVSILRPVKTRKGSKKQDGSKTKVRSNVTSRGKR.

Asp309 acts as the Nucleophile in catalysis. The Proton donor role is filled by Glu352. Residues 619-645 (VKTRKGSKKQDGSKTKVRSNVTSRGKR) are disordered. Residues 636–645 (RSNVTSRGKR) are compositionally biased toward polar residues.

This sequence belongs to the glycosyl hydrolase 13 family. GlgB subfamily. Monomer.

It carries out the reaction Transfers a segment of a (1-&gt;4)-alpha-D-glucan chain to a primary hydroxy group in a similar glucan chain.. It functions in the pathway glycan biosynthesis; glycogen biosynthesis. Its function is as follows. Catalyzes the formation of the alpha-1,6-glucosidic linkages in glycogen by scission of a 1,4-alpha-linked oligosaccharide from growing alpha-1,4-glucan chains and the subsequent attachment of the oligosaccharide to the alpha-1,6 position. The sequence is that of 1,4-alpha-glucan branching enzyme GlgB from Bacillus cereus (strain ATCC 10987 / NRS 248).